The sequence spans 516 residues: Putative sel1-like repeat-containing protein R850 (516 aa).

2 Sel1-like repeats span residues 103–138 (ALTY…NMNS) and 230–265 (SISQ…KQGD).

This Acanthamoeba polyphaga (Amoeba) protein is Putative sel1-like repeat-containing protein R850.